The chain runs to 290 residues: uncharacterized protein (290 aa).

The HTH lysR-type domain occupies methionine 1–threonine 61. A DNA-binding region (H-T-H motif) is located at residues isoleucine 20 to lysine 39.

It belongs to the LysR transcriptional regulatory family.

This is an uncharacterized protein from Bacillus subtilis (strain 168).